The sequence spans 86 residues: Omega-theraphotoxin-Hhn1f 3 (86 aa).

The first 21 residues, 1-21 (MKSIVFVALFGLALLAVACSA), serve as a signal peptide directing secretion. A propeptide spanning residues 22–50 (SEDAHKELLKEVVRAMVVDKTDAVQAEER) is cleaved from the precursor. 3 disulfides stabilise this stretch: Cys-52-Cys-66, Cys-59-Cys-71, and Cys-65-Cys-78.

It belongs to the neurotoxin 10 (Hwtx-1) family. 17 (Hntx-9) subfamily. As to expression, expressed by the venom gland.

The protein resides in the secreted. Its function is as follows. Ion channel inhibitor. The chain is Omega-theraphotoxin-Hhn1f 3 from Cyriopagopus hainanus (Chinese bird spider).